The sequence spans 354 residues: MSQHTSQYVFNSKEDYNVILDNMSREFEERWNHQTQSPYTNLENYITRAVLGNGSFGTVMLVREKSGKNYYAAKMMSKEDLVRLKQVAHVHNEKHVLNAARFPFLIYLVDSTKCFDYLYLILPLVNGGELFSYHRRVRKFNEKHARFYAAQVALALEYMHKMHLMYRDLKPENILLDQRGYIKITDFGFTKRVDGRTSTLCGTPEYLAPEIVQLRPYNKSVDWWAFGILVYEFVAGRSPFAIHNRDVILMYSKICICDYKMPSYFTSQLRSLVESLMQVDTSKRLGNSNDGSSDVKSHPWFQGVDWFGILNQEVTAPYQPTISGAEDLSNFENFEFKDRYKSRINRHPELFANF.

Positions 45 to 301 (YITRAVLGNG…SSDVKSHPWF (257 aa)) constitute a Protein kinase domain. ATP contacts are provided by residues 51-59 (LGNGSFGTV) and K74. D168 serves as the catalytic Proton acceptor. Positions 302 to 354 (QGVDWFGILNQEVTAPYQPTISGAEDLSNFENFEFKDRYKSRINRHPELFANF) constitute an AGC-kinase C-terminal domain.

The protein belongs to the protein kinase superfamily. AGC Ser/Thr protein kinase family. cAMP subfamily. In terms of tissue distribution, more abundant in adult body than adult head.

It carries out the reaction L-seryl-[protein] + ATP = O-phospho-L-seryl-[protein] + ADP + H(+). The enzyme catalyses L-threonyl-[protein] + ATP = O-phospho-L-threonyl-[protein] + ADP + H(+). The chain is cAMP-dependent protein kinase catalytic subunit 2 (Pka-C2) from Drosophila melanogaster (Fruit fly).